Reading from the N-terminus, the 129-residue chain is Ribosome-binding factor A (129 aa).

Belongs to the RbfA family. Monomer. Binds 30S ribosomal subunits, but not 50S ribosomal subunits or 70S ribosomes.

Its subcellular location is the cytoplasm. One of several proteins that assist in the late maturation steps of the functional core of the 30S ribosomal subunit. Associates with free 30S ribosomal subunits (but not with 30S subunits that are part of 70S ribosomes or polysomes). Required for efficient processing of 16S rRNA. May interact with the 5'-terminal helix region of 16S rRNA. This Actinobacillus succinogenes (strain ATCC 55618 / DSM 22257 / CCUG 43843 / 130Z) protein is Ribosome-binding factor A.